A 509-amino-acid chain; its full sequence is Inositol-3-phosphate synthase 1 (509 aa).

This sequence belongs to the myo-inositol 1-phosphate synthase family. It depends on NAD(+) as a cofactor. Highly expressed in anthers, but transcripts are undetectable in roots, leaves, flowers and embryos.

The protein resides in the cytoplasm. The catalysed reaction is D-glucose 6-phosphate = 1D-myo-inositol 3-phosphate. The protein operates within polyol metabolism; myo-inositol biosynthesis; myo-inositol from D-glucose 6-phosphate: step 1/2. In terms of biological role, key enzyme in myo-inositol biosynthesis pathway that catalyzes the conversion of glucose 6-phosphate to 1-myo-inositol 1-phosphate in a NAD-dependent manner. Is a key enzyme in the phytic acid biosynthesis pathway in seeds. The chain is Inositol-3-phosphate synthase 1 from Oryza sativa subsp. japonica (Rice).